We begin with the raw amino-acid sequence, 168 residues long: Cofilin-1-B (168 aa).

Alanine 2 carries the N-acetylalanine modification. The ADF-H domain maps to 4-153 (GVMVSDDVVK…NDPCNLADKL (150 aa)). A Nuclear localization signal motif is present at residues 30 to 34 (KKRKK).

Belongs to the actin-binding proteins ADF family. Post-translationally, inactive when phosphorylated. Phosphorylation levels vary during development. Oocytes contain only the phosphorylated form, and 80-95% of cfl1 protein is phosphorylated in unfertilized eggs. Rapid dephosphorylation occurs within 30 minutes after fertilization. Phosphorylation levels increase again between the morula and blastula stages (5-8 hpf) and then decrease again as gastrulation approaches. Dephosphorylated by pdxp. Expressed diffusely in both animal and vegetal hemispheres of the oocyte. During cleavage, expression accumulates around the cleavage furrow, along the vegetal membrane, and later in the midbody. Strongly expressed in the animal hemisphere during blastula stages, with most cells showing expression by gastrulation. By stage 17, expression is highest in cells of the developing neuroectoderm, and at stage 24 the notochord, neural tube, neural crest, somites and some cells of the archenteron show high expression. By stage 35, expression has declined in the notochord, but remains in the neural tube, epidermis and a layer of cells in the archenteron. Also highly expressed in the retina and neuronal cell bodies at the base of the cement gland but not the cement gland itself. At stage 38, expression is widespread, being highest in the nervous system and retina. In the adult, expression is high in the brain, heart, oocyte, stomach, and low in skeletal muscle.

The protein resides in the nucleus matrix. It localises to the cytoplasm. The protein localises to the cytoskeleton. Its subcellular location is the cell cortex. It is found in the membrane. May play a role in the regulation of cell morphology and cytoskeletal organization. Binds to F-actin and exhibits pH-sensitive F-actin depolymerizing activity. Required for formation of the cleavage furrow during cytokinesis. The chain is Cofilin-1-B (cfl1-b) from Xenopus laevis (African clawed frog).